Consider the following 362-residue polypeptide: Serine/threonine-protein kinase SBK2 (362 aa).

Over residues 1–11 (MPGKQSEDKPM) the composition is skewed to basic and acidic residues. The disordered stretch occupies residues 1 to 26 (MPGKQSEDKPMEVSTVEDGGDEGLGG). In terms of domain architecture, Protein kinase spans 62–330 (YEEVRPLGQG…IKSYLGQPWK (269 aa)). ATP contacts are provided by residues 68 to 76 (LGQGRFGRV) and Lys-91. Asp-183 acts as the Proton acceptor in catalysis. Positions 329-362 (WKQREGEAEELATELREDGWRGGQEAAKGEQPAC) are disordered.

Belongs to the protein kinase superfamily. Ser/Thr protein kinase family. STKL subfamily.

The catalysed reaction is L-seryl-[protein] + ATP = O-phospho-L-seryl-[protein] + ADP + H(+). The enzyme catalyses L-threonyl-[protein] + ATP = O-phospho-L-threonyl-[protein] + ADP + H(+). The chain is Serine/threonine-protein kinase SBK2 (Sbk2) from Mus musculus (Mouse).